Here is a 317-residue protein sequence, read N- to C-terminus: Gamma-glutamyl hydrolase (317 aa).

Positions 1–24 (MANLGYLLCLLGLLLCGLSSPGMS) are cleaved as a signal peptide. Positions 25-317 (RPYNHGSERP…SSFQQAYMFD (293 aa)) constitute a Gamma-glutamyl hydrolase domain. An N-linked (GlcNAc...) (high mannose) asparagine glycan is attached at asparagine 100. Cysteine 133 functions as the Nucleophile in the catalytic mechanism. Asparagine 162 and asparagine 188 each carry an N-linked (GlcNAc...) (high mannose) asparagine glycan. An N-linked (GlcNAc...) asparagine glycan is attached at asparagine 202. Histidine 243 serves as the catalytic Proton donor. An N-linked (GlcNAc...) asparagine glycan is attached at asparagine 306.

This sequence belongs to the peptidase C26 family. Homodimer. In terms of tissue distribution, isoform I (more expressed than isoform II in all tissues) is highly expressed in salivary gland, followed by kidney, liver, lung, stomach and uterus, and weakly expressed in small intestine, brain and fetal liver. Also expressed at a lower level in thymus, spleen and skeletal muscle. Also expressed in tumors.

It is found in the secreted. The protein localises to the extracellular space. It localises to the lysosome. Its subcellular location is the melanosome. The enzyme catalyses (6S)-5,6,7,8-tetrahydrofolyl-(gamma-L-Glu)(n) + (n-1) H2O = (6S)-5,6,7,8-tetrahydrofolate + (n-1) L-glutamate. Functionally, hydrolyzes the polyglutamate sidechains of pteroylpolyglutamates. Progressively removes gamma-glutamyl residues from pteroylpoly-gamma-glutamate to yield pteroyl-alpha-glutamate (folic acid) and free glutamate. May play an important role in the bioavailability of dietary pteroylpolyglutamates and in the metabolism of pteroylpolyglutamates and antifolates. This chain is Gamma-glutamyl hydrolase (Ggh), found in Mus musculus (Mouse).